The chain runs to 176 residues: HTH-type transcriptional regulator DctR (176 aa).

One can recognise an HTH luxR-type domain in the interval Val109–Tyr174. The segment at residues Thr133 to His152 is a DNA-binding region (H-T-H motif).

Functionally, may act as a transcriptional regulator of dctA. The sequence is that of HTH-type transcriptional regulator DctR (dctR) from Escherichia coli O6:H1 (strain CFT073 / ATCC 700928 / UPEC).